The following is a 250-amino-acid chain: High affinity immunoglobulin epsilon receptor subunit alpha (250 aa).

The N-terminal stretch at 1 to 23 (MVTGRSAQLCLALLFMSLDVILT) is a signal peptide. The Extracellular segment spans residues 24-204 (ATEKSVLTLD…AYKCKYYWLQ (181 aa)). The 77-residue stretch at 28–104 (SVLTLDPPWI…QGLFKSKPVY (77 aa)) folds into the Ig-like 1 domain. A disulfide bridge connects residues cysteine 49 and cysteine 92. Residues asparagine 58, asparagine 66, asparagine 73, asparagine 106, asparagine 152, and asparagine 167 are each glycosylated (N-linked (GlcNAc...) asparagine). The region spanning 114–181 (LQTSADMVLV…YHCKGYLRQV (68 aa)) is the Ig-like 2 domain. Cysteine 131 and cysteine 174 are joined by a disulfide. A helical transmembrane segment spans residues 205 to 223 (LIFPLLVAILFAVDTGLLL). At 224–250 (STEEQFKSVLEIQKTGKYKKVETELLT) the chain is on the cytoplasmic side.

In terms of assembly, tetramer of an alpha chain, a beta chain, and two disulfide linked gamma chains. Interacts with IGHE (via CH3 region). Expressed in bone marrow mast cells, as well as in the pineal gland at night.

Its subcellular location is the cell membrane. Its function is as follows. High-affinity receptor for immunoglobulin epsilon/IgE. Mediates IgE effector functions in myeloid cells. Upon IgE binding and antigen/allergen cross-linking initiates signaling pathways that lead to myeloid cell activation and differentiation. On mast cells, basophils and eosinophils stimulates the secretion of vasoactive amines, lipid mediators and cytokines that contribute to inflammatory response, tissue remodeling and cytotoxicity against microbes. Triggers the immediate hypersensitivity response to allergens as a host defense mechanism against helminth parasites, pathogenic bacteria and venom toxicity. When dysregulated, it can elicit harmful life-threatening allergic and anaphylactic reactions. In Mus musculus (Mouse), this protein is High affinity immunoglobulin epsilon receptor subunit alpha (Fcer1a).